The chain runs to 28 residues: Metallothionein-like protein type 2 LSC210 (28 aa).

It belongs to the metallothionein superfamily. Type 15 family.

In terms of biological role, metallothioneins have a high content of cysteine residues that bind various heavy metals. This chain is Metallothionein-like protein type 2 LSC210 (LSC210), found in Brassica napus (Rape).